The primary structure comprises 440 residues: Cytochrome c biogenesis protein Ccs1 (440 aa).

The next 3 helical transmembrane spans lie at 25–45 (LQFS…GTVI), 84–104 (TWWF…CSIS), and 170–190 (LAPI…VLGL).

It belongs to the Ccs1/CcsB family. May interact with CcsA.

Its subcellular location is the plastid. The protein localises to the chloroplast thylakoid membrane. In terms of biological role, required during biogenesis of c-type cytochromes (cytochrome c6 and cytochrome f) at the step of heme attachment. This Pyropia yezoensis (Susabi-nori) protein is Cytochrome c biogenesis protein Ccs1.